A 229-amino-acid polypeptide reads, in one-letter code: Translin (229 aa).

The tract at residues 86-90 (RFHEH) is DNA/RNA binding. Residues 177-198 (LDSGFRLLNLKNDSLRKRYDGL) form a leucine-zipper region.

Belongs to the translin family. Ring-shaped heterooctamer of six TSN and two TSNAX subunits, DNA/RNA binding occurs inside the ring.

Its subcellular location is the cytoplasm. It localises to the nucleus. Exhibits both single-stranded and double-stranded endoribonuclease activity. May act as an activator of RNA-induced silencing complex (RISC) by facilitating endonucleolytic cleavage of the siRNA passenger strand. Functionally, DNA-binding protein that specifically recognizes consensus sequences at the breakpoint junctions in chromosomal translocations, mostly involving immunoglobulin (Ig)/T-cell receptor gene segments. Seems to recognize single-stranded DNA ends generated by staggered breaks occurring at recombination hot spots. The protein is Translin (TSN) of Gallus gallus (Chicken).